The primary structure comprises 115 residues: Promotilin (115 aa).

The signal sequence occupies residues 1-25 (MVSRKAVAALLVVHAPAMLASQTEA). The tract at residues 40 to 74 (EKERSKGQKKSLSVWQRSGEEGPVDPAEPIEEEGN) is disordered.

This sequence belongs to the motilin family.

Its subcellular location is the secreted. Functionally, plays an important role in the regulation of interdigestive gastrointestinal motility and indirectly causes rhythmic contraction of duodenal and colonic smooth muscle. The polypeptide is Promotilin (MLN) (Macaca mulatta (Rhesus macaque)).